A 566-amino-acid chain; its full sequence is MKQSMVFSPTLREVPADAEIKSHQLLLRAGFMRQNASGIYSFLPFGLKVLHKVERIVREEMERAGAVELLMPAMQAAELWQESGRWYSYGSELMRMKDRNAREFALGATHEEVITDLVRDEVKSYKKLPLTLYQIQTKFRDEQRPRFGLLRGREFLMKDAYSFHATQESLDEVYDRLYKAYSNIFARCGLNFRAVIADSGAMGGKDTHEFMVLSDVGEDTIAYSDTSDYAANIEMAPVVATYTKSDEAEKALEKVATPDQKAIEEVSAFLNIEAEKCIKSMVFKVDEKLVVVLVRGDHEVNDVKVKNVYGASVVELASHEEVKELLHCEVGSLGPIGVTGDIEIIADHAVASIVNGCSGANEEGFHYVNVNPERDFKVSQYTDLRFIQEGDQSPDGNGTILFARGIEVGHVFKLGTRYSEAMNATFLDENGKTQPLIMGCYGIGVSRTVAAIAEQFNDENGLVWPKAVAPFHVHVIPVNMKSDAQREMGENIYNSLQEQGYEVLLDDRAERAGVKFADADLFGLPVRVTVGKKADEGIVEVKVRATGESEEVKVEELQTYIANILK.

The protein belongs to the class-II aminoacyl-tRNA synthetase family. ProS type 1 subfamily. As to quaternary structure, homodimer.

The protein localises to the cytoplasm. It carries out the reaction tRNA(Pro) + L-proline + ATP = L-prolyl-tRNA(Pro) + AMP + diphosphate. Its function is as follows. Catalyzes the attachment of proline to tRNA(Pro) in a two-step reaction: proline is first activated by ATP to form Pro-AMP and then transferred to the acceptor end of tRNA(Pro). As ProRS can inadvertently accommodate and process non-cognate amino acids such as alanine and cysteine, to avoid such errors it has two additional distinct editing activities against alanine. One activity is designated as 'pretransfer' editing and involves the tRNA(Pro)-independent hydrolysis of activated Ala-AMP. The other activity is designated 'posttransfer' editing and involves deacylation of mischarged Ala-tRNA(Pro). The misacylated Cys-tRNA(Pro) is not edited by ProRS. This chain is Proline--tRNA ligase, found in Bacillus cereus (strain Q1).